The sequence spans 427 residues: MSSNAQLFDRACRSIPGGVNSPVRAFRSVGGTPRFIKRAQGPYVWDEEDTRYIDYVGSWGPAILGHAHPDVVQAVREAALDGLSFGAPTRAEVELAEVLIERLPSLEQVRLVSSGTEATMTAIRLARGATGRAKIIKFEGCYHGHSDSLLVKAGSGLLTFGNPSSAGVPPEFVSHTLTLEYNNLAAVQAAFAQHGADIACVIVEPVAGNMNLIKPAAGFLQGLRDVCTQHGAVLIFDEVMTGFRVGPQGVQGLAGIKPDLTTLAKVIGGGMPVGALGGRADLMAHLAPLGGVYQAGTLSGNPVAVAAGLATLRLIAQPGFYEQLAAQTQRLTDGLRQRARAAGIPFAADAIGGMFGLYFQDSVPTSFAEVSAGDADAFKRFFHAMLDRGVHFAPSAFEAGFVSATHDNAVIDATLDAAEAVFAAMKG.

Lysine 265 carries the post-translational modification N6-(pyridoxal phosphate)lysine.

It belongs to the class-III pyridoxal-phosphate-dependent aminotransferase family. HemL subfamily. As to quaternary structure, homodimer. Pyridoxal 5'-phosphate serves as cofactor.

The protein resides in the cytoplasm. The enzyme catalyses (S)-4-amino-5-oxopentanoate = 5-aminolevulinate. It participates in porphyrin-containing compound metabolism; protoporphyrin-IX biosynthesis; 5-aminolevulinate from L-glutamyl-tRNA(Glu): step 2/2. This Bordetella petrii (strain ATCC BAA-461 / DSM 12804 / CCUG 43448) protein is Glutamate-1-semialdehyde 2,1-aminomutase.